The following is a 418-amino-acid chain: Enolase (418 aa).

Gln-162 contributes to the (2R)-2-phosphoglycerate binding site. Residue Glu-204 is the Proton donor of the active site. The Mg(2+) site is built by Asp-241, Glu-283, and Asp-309. (2R)-2-phosphoglycerate is bound by residues Lys-334, Arg-363, Ser-364, and Lys-385. Lys-334 serves as the catalytic Proton acceptor.

This sequence belongs to the enolase family. Mg(2+) serves as cofactor.

Its subcellular location is the cytoplasm. It is found in the secreted. It localises to the cell surface. It catalyses the reaction (2R)-2-phosphoglycerate = phosphoenolpyruvate + H2O. It functions in the pathway carbohydrate degradation; glycolysis; pyruvate from D-glyceraldehyde 3-phosphate: step 4/5. Its function is as follows. Catalyzes the reversible conversion of 2-phosphoglycerate (2-PG) into phosphoenolpyruvate (PEP). It is essential for the degradation of carbohydrates via glycolysis. This chain is Enolase, found in Pelagibacter ubique (strain HTCC1062).